The chain runs to 185 residues: MSNVELRIENIVASVDLFASLDLEKVIEICPHSKYNPEEFPGIICRFDEPKVALLVFSSGKLVVTGAKSVDDIQAAVSKLVEMLSKIGTKFGRAPEIDIQNMVFSGDLKMEFNLDAVALVLPNCEYEPEQFPGVIYRVKDPKAVILLFSSGKIVCSGAKSEHDAWEAVKKLLHELDKYGLIEEEA.

Tandem repeats lie at residues 8-84 (IENI…VEML) and 99-175 (IQNM…LHEL).

It belongs to the TBP family.

In terms of biological role, general factor that plays a role in the activation of archaeal genes transcribed by RNA polymerase. Binds specifically to the TATA box promoter element which lies close to the position of transcription initiation. The protein is TATA-box-binding protein of Thermococcus sibiricus (strain DSM 12597 / MM 739).